Consider the following 318-residue polypeptide: Ubiquitin-conjugating enzyme E2 J1 (318 aa).

The Cytoplasmic portion of the chain corresponds to 1 to 282; sequence METRYNLKSP…QGHQPRDNHT (282 aa). Residues 10 to 160 form the UBC core domain; sequence PAVKRLMKEA…GCGSAMKDVL (151 aa). The active-site Glycyl thioester intermediate is the Cys91. Ser184 is subject to Phosphoserine; by MAPKAPK2. The span at 229 to 248 shows a compositional bias: polar residues; the sequence is LQNSSAASFHQPTQPVAKNT. Positions 229–283 are disordered; that stretch reads LQNSSAASFHQPTQPVAKNTSMSPRQRRAQQQSQRRLSTSPDVIQGHQPRDNHTD. Low complexity predominate over residues 249–268; sequence SMSPRQRRAQQQSQRRLSTS. 2 positions are modified to phosphoserine: Ser266 and Ser268. The chain crosses the membrane as a helical; Anchor for type IV membrane protein span at residues 283–303; that stretch reads DHGGSAVLIVILTLALAALIF. At 304-318 the chain is on the lumenal side; it reads RRIYLANEYIFDFEL.

The protein belongs to the ubiquitin-conjugating enzyme family. As to quaternary structure, component of the HRD1 complex, which comprises at least SYNV1/HRD1, DERL1/2, FAM8A1, HERPUD1/HERP, OS9, SEL1L and UBE2J1. Interacts with E3 ligase RNF26. Interacts with E3 ligase RNF133. Phosphorylated at Ser-184 in a cytosolic stress-dependent manner by MAP kinase p38 MAPKAPK2. Post-translationally, phosphorylated UBE2J1 is rapidly ubiquitinated and subsequently degraded by the proteasome. As to expression, expressed in testes.

It is found in the endoplasmic reticulum membrane. It carries out the reaction S-ubiquitinyl-[E1 ubiquitin-activating enzyme]-L-cysteine + [E2 ubiquitin-conjugating enzyme]-L-cysteine = [E1 ubiquitin-activating enzyme]-L-cysteine + S-ubiquitinyl-[E2 ubiquitin-conjugating enzyme]-L-cysteine.. Its pathway is protein modification; protein ubiquitination. In terms of biological role, catalyzes the covalent attachment of ubiquitin to other proteins. Functions in the selective degradation of misfolded membrane proteins from the endoplasmic reticulum (ERAD) and is essential for cells to recover from ER stress. Plays a role in MAPKAPK2-dependent translational control of TNF-alpha synthesis. Also acts as a platform for perinuclear positioning of the endosomal system by mediating ubiquitination of SQSTM1 through interaction with the E3 ubiquitin-protein ligase RNF26. Plays a role in male fecundity through the interaction with the E3 ubiquitin-protein ligase RNF133. Its function is as follows. (Microbial infection) Promotes Dengue virus RNA replication by negatively regulating IFN-beta signaling and mediating 'Lys-48'-linked ubiquitination on IRF3. The polypeptide is Ubiquitin-conjugating enzyme E2 J1 (Homo sapiens (Human)).